Here is a 225-residue protein sequence, read N- to C-terminus: Triosephosphate isomerase (225 aa).

9 to 11 (NMK) lines the substrate pocket. The Electrophile role is filled by His93. Glu141 acts as the Proton acceptor in catalysis. Residues Ile146, Gly181, and 202–203 (AS) contribute to the substrate site.

This sequence belongs to the triosephosphate isomerase family. In terms of assembly, homotetramer; dimer of dimers.

It is found in the cytoplasm. The catalysed reaction is D-glyceraldehyde 3-phosphate = dihydroxyacetone phosphate. It participates in carbohydrate biosynthesis; gluconeogenesis. It functions in the pathway carbohydrate degradation; glycolysis; D-glyceraldehyde 3-phosphate from glycerone phosphate: step 1/1. Its function is as follows. Involved in the gluconeogenesis. Catalyzes stereospecifically the conversion of dihydroxyacetone phosphate (DHAP) to D-glyceraldehyde-3-phosphate (G3P). The sequence is that of Triosephosphate isomerase from Caldivirga maquilingensis (strain ATCC 700844 / DSM 13496 / JCM 10307 / IC-167).